A 405-amino-acid chain; its full sequence is Glycosylated lysosomal membrane protein A (405 aa).

An N-terminal signal peptide occupies residues 1 to 25; sequence MGCTRGWRLLLLLGLVCVGALQGRG. Topologically, residues 26–365 are lumenal; the sequence is QEESREVSLQ…YGEPPRDSFS (340 aa). N-linked (GlcNAc...) asparagine glycans are attached at residues Asn-55, Asn-86, Asn-125, Asn-129, Asn-143, Asn-153, Asn-157, Asn-164, Asn-169, Asn-179, Asn-206, Asn-222, Asn-267, Asn-304, and Asn-331. A helical membrane pass occupies residues 366–386; the sequence is ILVICIMAVALGTPLLLLIVG. Residues 387–405 are Cytoplasmic-facing; it reads TLVVTALRHKVYSNYEPIN. The short motif at 401 to 405 is the Lysosomal targeting motif element; it reads YEPIN.

Belongs to the GLMP family. Interacts (via lumenal domain) with lysosomal protein MFSD1; the interaction starts while both proteins are still in the endoplasmic reticulum and is required for stabilization of MFSD1 in lysosomes but has no direct effect on its targeting to lysosomes or transporter activity.

It is found in the lysosome membrane. Functionally, required to protect lysosomal transporter MFSD1 from lysosomal proteolysis and for MFSD1 lysosomal localization. The chain is Glycosylated lysosomal membrane protein A (glmp-a) from Xenopus laevis (African clawed frog).